Here is a 527-residue protein sequence, read N- to C-terminus: NAD(P)H-quinone oxidoreductase chain 4 1 (527 aa).

Transmembrane regions (helical) follow at residues 5 to 25 (FPWL…LPII), 35 to 55 (WYSL…FCTG), 90 to 110 (LIIL…PVSF), 112 to 132 (PKLF…VFAV), 136 to 156 (LLFF…LSIW), 168 to 188 (FILY…TMAF), 211 to 231 (LLLY…FPLH), 242 to 262 (TAPA…YALL), 274 to 294 (AVFA…AALT), 310 to 330 (ISHM…GLSG), 331 to 351 (AVLQ…LVGA), 386 to 406 (LALP…GFAT), 416 to 436 (VLVI…LLSM), and 463 to 483 (VFII…PKIV).

This sequence belongs to the complex I subunit 4 family.

Its subcellular location is the cellular thylakoid membrane. It carries out the reaction a plastoquinone + NADH + (n+1) H(+)(in) = a plastoquinol + NAD(+) + n H(+)(out). The enzyme catalyses a plastoquinone + NADPH + (n+1) H(+)(in) = a plastoquinol + NADP(+) + n H(+)(out). NDH-1 shuttles electrons from NAD(P)H, via FMN and iron-sulfur (Fe-S) centers, to quinones in the respiratory chain. The immediate electron acceptor for the enzyme in this species is believed to be plastoquinone. Couples the redox reaction to proton translocation (for every two electrons transferred, four hydrogen ions are translocated across the cytoplasmic membrane), and thus conserves the redox energy in a proton gradient. The polypeptide is NAD(P)H-quinone oxidoreductase chain 4 1 (Trichodesmium erythraeum (strain IMS101)).